We begin with the raw amino-acid sequence, 585 residues long: Isocitrate dehydrogenase kinase/phosphatase (585 aa).

Residues 315 to 321 (APGVKGM) and K336 contribute to the ATP site. The active site involves D371.

It belongs to the AceK family.

It is found in the cytoplasm. The enzyme catalyses L-seryl-[isocitrate dehydrogenase] + ATP = O-phospho-L-seryl-[isocitrate dehydrogenase] + ADP + H(+). Functionally, bifunctional enzyme which can phosphorylate or dephosphorylate isocitrate dehydrogenase (IDH) on a specific serine residue. This is a regulatory mechanism which enables bacteria to bypass the Krebs cycle via the glyoxylate shunt in response to the source of carbon. When bacteria are grown on glucose, IDH is fully active and unphosphorylated, but when grown on acetate or ethanol, the activity of IDH declines drastically concomitant with its phosphorylation. The sequence is that of Isocitrate dehydrogenase kinase/phosphatase from Photorhabdus laumondii subsp. laumondii (strain DSM 15139 / CIP 105565 / TT01) (Photorhabdus luminescens subsp. laumondii).